Here is a 191-residue protein sequence, read N- to C-terminus: Scytalone dehydratase PfmaJ (191 aa).

Substrate contacts are provided by tyrosine 25, tyrosine 45, and phenylalanine 48. Residues histidine 80 and histidine 105 contribute to the active site. Asparagine 126 serves as a coordination point for substrate.

The protein belongs to the scytalone dehydratase family. As to quaternary structure, homotrimer. Each subunit contains an active site, located in the central part of the hydrophobic core of the monomer, which functions independently.

The protein resides in the endosome. It catalyses the reaction scytalone = 1,3,8-trihydroxynaphthalene + H2O. Its pathway is pigment biosynthesis; melanin biosynthesis. Its function is as follows. Scytalone dehydratase involved the biosynthesis of dihydroxynaphthalene (DHN)-melanin, a bluish-green pigment forming a dark layer in the conidial wall that protects the conidia from UV radiations. The first step of the pathway is the production of the pentaketide 1,3,6,8-tetrahydroxynaphthalene (1,3,6,8-THN or T4HN) by the polyketide synthase PfmaE though condensation of acetyl-CoA with malonyl-CoA. T4HN is not stable and easily oxidizes into the stable form flaviolin. T4HN is also substrate of the hydroxynaphthalene reductase PfmaG to yield scytalone. The scytalone dehydratase PfmaJ then reduces scytalone to 1,3,8-THN. 1,3,8-THN is then substrate of the hydroxynaphthalene reductase PfmaI to yield vermelone. Vermelone is further converted by the multicopper oxidase PfmaD to 1,8-DHN. Finally the laccase PFICI_06862 transforms 1,8-DHN to DHN-melanin. The roles of the 5-oxoprolinase PfmaA and the proline iminopeptidase PfmaB within the cluster have not been elucidated yet. This chain is Scytalone dehydratase PfmaJ, found in Pestalotiopsis fici (strain W106-1 / CGMCC3.15140).